The following is a 163-amino-acid chain: NADH-quinone oxidoreductase subunit I (163 aa).

4Fe-4S ferredoxin-type domains are found at residues 54–84 (LRRY…IDSA) and 94–123 (TRYD…ETHI). Cys-64, Cys-67, Cys-70, Cys-74, Cys-103, Cys-106, Cys-109, and Cys-113 together coordinate [4Fe-4S] cluster.

The protein belongs to the complex I 23 kDa subunit family. In terms of assembly, NDH-1 is composed of 14 different subunits. Subunits NuoA, H, J, K, L, M, N constitute the membrane sector of the complex. The cofactor is [4Fe-4S] cluster.

Its subcellular location is the cell inner membrane. The enzyme catalyses a quinone + NADH + 5 H(+)(in) = a quinol + NAD(+) + 4 H(+)(out). NDH-1 shuttles electrons from NADH, via FMN and iron-sulfur (Fe-S) centers, to quinones in the respiratory chain. The immediate electron acceptor for the enzyme in this species is believed to be ubiquinone. Couples the redox reaction to proton translocation (for every two electrons transferred, four hydrogen ions are translocated across the cytoplasmic membrane), and thus conserves the redox energy in a proton gradient. The chain is NADH-quinone oxidoreductase subunit I from Xanthomonas campestris pv. campestris (strain 8004).